The sequence spans 319 residues: MVRVFFAGTPECAVPSLRRVACAHRVVGVLTNPPAAVGRSGKLVHSAVAREFFRLKASGVLPESASLFVPGRLDRAFYDAVEALRPDVLVCFAYGKIFGPRFLALFPRGAINVHPSLLPRWRGSTPVPAAILAGDCETGVTLQYIGEEMDAGDILAQSRVQLDGTETTGALLSRLSLVAADLVDDVLVGVERHTLAPAAQDHSQATFCGKLCREMGLADWSNPAVVLERKIRAFTPWPGLFTYKDGERIAILQARSCESSFVPLAPVGTVLAADKNGVFVQTGDGVLSLLQLQRSGKKPLFWRDFLNGSPLLLTGRLGV.

Residue 116-119 (SLLP) coordinates (6S)-5,6,7,8-tetrahydrofolate.

Belongs to the Fmt family.

It carries out the reaction L-methionyl-tRNA(fMet) + (6R)-10-formyltetrahydrofolate = N-formyl-L-methionyl-tRNA(fMet) + (6S)-5,6,7,8-tetrahydrofolate + H(+). In terms of biological role, attaches a formyl group to the free amino group of methionyl-tRNA(fMet). The formyl group appears to play a dual role in the initiator identity of N-formylmethionyl-tRNA by promoting its recognition by IF2 and preventing the misappropriation of this tRNA by the elongation apparatus. The protein is Methionyl-tRNA formyltransferase of Treponema pallidum (strain Nichols).